Reading from the N-terminus, the 178-residue chain is ATP-dependent protease subunit HslV (178 aa).

Thr7 is an active-site residue. Na(+) is bound by residues Gly162, Cys165, and Thr168.

Belongs to the peptidase T1B family. HslV subfamily. A double ring-shaped homohexamer of HslV is capped on each side by a ring-shaped HslU homohexamer. The assembly of the HslU/HslV complex is dependent on binding of ATP.

The protein localises to the cytoplasm. The enzyme catalyses ATP-dependent cleavage of peptide bonds with broad specificity.. With respect to regulation, allosterically activated by HslU binding. Functionally, protease subunit of a proteasome-like degradation complex believed to be a general protein degrading machinery. The protein is ATP-dependent protease subunit HslV of Paraburkholderia xenovorans (strain LB400).